The following is a 138-amino-acid chain: Basic phospholipase A2 B (138 aa).

The N-terminal stretch at 1–16 is a signal peptide; sequence MRALWIVAVLLLGVEG. Intrachain disulfides connect cysteine 42-cysteine 131, cysteine 44-cysteine 60, cysteine 59-cysteine 111, cysteine 65-cysteine 138, cysteine 66-cysteine 104, cysteine 73-cysteine 97, and cysteine 91-cysteine 102. Positions 43, 45, and 47 each coordinate Ca(2+). The active site involves histidine 63. Aspartate 64 is a binding site for Ca(2+). The active site involves aspartate 105.

Belongs to the phospholipase A2 family. Group II subfamily. D49 sub-subfamily. Ca(2+) is required as a cofactor. In terms of tissue distribution, expressed by the venom gland.

It localises to the secreted. The enzyme catalyses a 1,2-diacyl-sn-glycero-3-phosphocholine + H2O = a 1-acyl-sn-glycero-3-phosphocholine + a fatty acid + H(+). Functionally, snake venom phospholipase A2 (PLA2) that shows potent hemolytic activity, and exhibits medium anticoagulant effects by binding to factor Xa (F10) and inhibiting the prothrombinase activity (IC(50) is 90 nM). It is one of the few phospholipases A2 capable of hydrolyzing the phospholipids of E.coli membranes in the presence of a bactericidal/permeability-increasing protein (BPI) of neutrophils. PLA2 catalyzes the calcium-dependent hydrolysis of the 2-acyl groups in 3-sn-phosphoglycerides. This Gloydius halys (Chinese water mocassin) protein is Basic phospholipase A2 B.